Consider the following 1463-residue polypeptide: DNA-directed RNA polymerase subunit beta'' (1463 aa).

Residues cysteine 239, cysteine 312, cysteine 319, and cysteine 322 each coordinate Zn(2+). 2 disordered regions span residues 836 to 869 (TFTGEEKQEGNKPVEITSKNRRKSAANSSHETRM) and 987 to 1007 (TNRSKTRRNASGKTQVKAQAR). Residues 860–869 (AANSSHETRM) are compositionally biased toward polar residues. Residues 987 to 996 (TNRSKTRRNA) are compositionally biased toward basic residues. Residues 997–1007 (SGKTQVKAQAR) show a composition bias toward polar residues.

The protein belongs to the RNA polymerase beta' chain family. RpoC2 subfamily. As to quaternary structure, in plastids the minimal PEP RNA polymerase catalytic core is composed of four subunits: alpha, beta, beta', and beta''. When a (nuclear-encoded) sigma factor is associated with the core the holoenzyme is formed, which can initiate transcription. The cofactor is Zn(2+).

The protein resides in the plastid. The protein localises to the chloroplast. It carries out the reaction RNA(n) + a ribonucleoside 5'-triphosphate = RNA(n+1) + diphosphate. Its function is as follows. DNA-dependent RNA polymerase catalyzes the transcription of DNA into RNA using the four ribonucleoside triphosphates as substrates. The sequence is that of DNA-directed RNA polymerase subunit beta'' from Nephroselmis olivacea (Green alga).